A 346-amino-acid chain; its full sequence is Uracil-DNA glycosylase (346 aa).

Residues 1–105 (MSGKITDFFE…KLKNEEKSEE (105 aa)) form a disordered region. Residues 20–29 (AENKDNDKEL) show a composition bias toward basic and acidic residues. Residues 30 to 42 (TSTTTTTTTTSTT) show a composition bias toward low complexity. Residues 43 to 64 (SKKKVAAAPKKKAAVASKKRKH) are compositionally biased toward basic residues. Positions 67–86 (SDEETDKEEQQNDDDDDGEE) are enriched in acidic residues. D186 serves as the catalytic Proton acceptor.

Belongs to the uracil-DNA glycosylase (UDG) superfamily. UNG family.

It is found in the mitochondrion. It localises to the nucleus. It carries out the reaction Hydrolyzes single-stranded DNA or mismatched double-stranded DNA and polynucleotides, releasing free uracil.. Functionally, excises uracil residues from the DNA which can arise as a result of misincorporation of dUMP residues by DNA polymerase or due to deamination of cytosine. This is Uracil-DNA glycosylase (uglA) from Dictyostelium discoideum (Social amoeba).